The primary structure comprises 164 residues: MERFLENAMYASRWLLAPVYFGLSLALVALALKFFQEIIHVLPNIFSMAESDLILVLLSLVDMTLVGGLLVMVMFSGYENFVSQLDISKNKEKLNWLGKMDATSLKNKVAASIVAISSIHLLRVFMDAKNVPDNKLMWYVIIHLTFVLSAFVMGYLDRLTRHNH.

3 helical membrane-spanning segments follow: residues 15–35 (LLAPVYFGLSLALVALALKFF), 53–73 (LILVLLSLVDMTLVGGLLVMV), and 136–156 (LMWYVIIHLTFVLSAFVMGYL).

Belongs to the UPF0114 family.

The protein localises to the cell membrane. The protein is UPF0114 protein YqhA of Shigella dysenteriae serotype 1 (strain Sd197).